We begin with the raw amino-acid sequence, 355 residues long: S-adenosylmethionine:tRNA ribosyltransferase-isomerase (355 aa).

It belongs to the QueA family. Monomer.

Its subcellular location is the cytoplasm. The enzyme catalyses 7-aminomethyl-7-carbaguanosine(34) in tRNA + S-adenosyl-L-methionine = epoxyqueuosine(34) in tRNA + adenine + L-methionine + 2 H(+). The protein operates within tRNA modification; tRNA-queuosine biosynthesis. Functionally, transfers and isomerizes the ribose moiety from AdoMet to the 7-aminomethyl group of 7-deazaguanine (preQ1-tRNA) to give epoxyqueuosine (oQ-tRNA). This chain is S-adenosylmethionine:tRNA ribosyltransferase-isomerase, found in Photorhabdus laumondii subsp. laumondii (strain DSM 15139 / CIP 105565 / TT01) (Photorhabdus luminescens subsp. laumondii).